The following is a 446-amino-acid chain: Exodeoxyribonuclease 7 large subunit (446 aa).

The protein belongs to the XseA family. In terms of assembly, heterooligomer composed of large and small subunits.

It is found in the cytoplasm. The enzyme catalyses Exonucleolytic cleavage in either 5'- to 3'- or 3'- to 5'-direction to yield nucleoside 5'-phosphates.. In terms of biological role, bidirectionally degrades single-stranded DNA into large acid-insoluble oligonucleotides, which are then degraded further into small acid-soluble oligonucleotides. The polypeptide is Exodeoxyribonuclease 7 large subunit (Xanthomonas campestris pv. campestris (strain B100)).